The sequence spans 360 residues: Phospho-N-acetylmuramoyl-pentapeptide-transferase (360 aa).

10 helical membrane-spanning segments follow: residues 24–44, 69–89, 92–112, 133–153, 158–178, 199–219, 239–259, 263–283, 288–308, and 337–357; these read RAVM…PWTI, GTPT…TLLW, WANP…ALGF, MVWQ…LAAN, ILIV…GFLV, GLAT…AYAS, VVIF…FNAY, VFMG…VAVI, FVLV…MLQV, and QVVV…LSTL.

The protein belongs to the glycosyltransferase 4 family. MraY subfamily. The cofactor is Mg(2+).

The protein localises to the cell inner membrane. It catalyses the reaction UDP-N-acetyl-alpha-D-muramoyl-L-alanyl-gamma-D-glutamyl-meso-2,6-diaminopimeloyl-D-alanyl-D-alanine + di-trans,octa-cis-undecaprenyl phosphate = di-trans,octa-cis-undecaprenyl diphospho-N-acetyl-alpha-D-muramoyl-L-alanyl-D-glutamyl-meso-2,6-diaminopimeloyl-D-alanyl-D-alanine + UMP. Its pathway is cell wall biogenesis; peptidoglycan biosynthesis. Catalyzes the initial step of the lipid cycle reactions in the biosynthesis of the cell wall peptidoglycan: transfers peptidoglycan precursor phospho-MurNAc-pentapeptide from UDP-MurNAc-pentapeptide onto the lipid carrier undecaprenyl phosphate, yielding undecaprenyl-pyrophosphoryl-MurNAc-pentapeptide, known as lipid I. This Neisseria meningitidis serogroup C / serotype 2a (strain ATCC 700532 / DSM 15464 / FAM18) protein is Phospho-N-acetylmuramoyl-pentapeptide-transferase.